The chain runs to 228 residues: Ribose-5-phosphate isomerase A (228 aa).

Residues 27 to 30 (TGTT), 86 to 89 (DGAD), and 100 to 103 (KGGG) each bind substrate. E109 acts as the Proton acceptor in catalysis. K127 contacts substrate.

The protein belongs to the ribose 5-phosphate isomerase family. As to quaternary structure, homodimer.

The enzyme catalyses aldehydo-D-ribose 5-phosphate = D-ribulose 5-phosphate. It participates in carbohydrate degradation; pentose phosphate pathway; D-ribose 5-phosphate from D-ribulose 5-phosphate (non-oxidative stage): step 1/1. In terms of biological role, catalyzes the reversible conversion of ribose-5-phosphate to ribulose 5-phosphate. This is Ribose-5-phosphate isomerase A from Borrelia hermsii (strain HS1 / DAH).